The chain runs to 129 residues: Small ribosomal subunit protein uS11 (129 aa).

The protein belongs to the universal ribosomal protein uS11 family. Part of the 30S ribosomal subunit. Interacts with proteins S7 and S18. Binds to IF-3.

Functionally, located on the platform of the 30S subunit, it bridges several disparate RNA helices of the 16S rRNA. Forms part of the Shine-Dalgarno cleft in the 70S ribosome. The chain is Small ribosomal subunit protein uS11 from Hahella chejuensis (strain KCTC 2396).